A 318-amino-acid polypeptide reads, in one-letter code: Large ribosomal subunit protein uL10 (318 aa).

Residue Tyr-24 is modified to Phosphotyrosine. Phosphothreonine is present on Thr-59. A Glycyl lysine isopeptide (Lys-Gly) (interchain with G-Cter in ubiquitin) cross-link involves residue Lys-264. A Glycyl lysine isopeptide (Lys-Gly) (interchain with G-Cter in SUMO1); alternate cross-link involves residue Lys-298. Residue Lys-298 forms a Glycyl lysine isopeptide (Lys-Gly) (interchain with G-Cter in SUMO2); alternate linkage. Positions 298-318 (KVEAKEESEESDEDMGFGLFD) are disordered. A compositionally biased stretch (acidic residues) spans 303–312 (EESEESDEDM). A phosphoserine mark is found at Ser-305 and Ser-308.

It belongs to the universal ribosomal protein uL10 family. In terms of assembly, P0 forms a pentameric complex by interaction with dimers of P1 and P2. Identified in a IGF2BP1-dependent mRNP granule complex containing untranslated mRNAs. Interacts with APEX1. Interacts with FMR1. Post-translationally, ubiquitinated at Lys-264 by RNF14 and RNF25 in response to ribosome collisions (ribosome stalling).

It localises to the nucleus. It is found in the cytoplasm. In terms of biological role, ribosomal protein P0 is the functional equivalent of E.coli protein L10. The protein is Large ribosomal subunit protein uL10 (RPLP0) of Sus scrofa (Pig).